Consider the following 505-residue polypeptide: UDP-N-acetylmuramoyl-L-alanyl-D-glutamate--2,6-diaminopimelate ligase (505 aa).

Ser42 provides a ligand contact to UDP-N-acetyl-alpha-D-muramoyl-L-alanyl-D-glutamate. 126–132 (GTNGKTT) provides a ligand contact to ATP. UDP-N-acetyl-alpha-D-muramoyl-L-alanyl-D-glutamate contacts are provided by residues 168–169 (TT), Ser195, Gln201, and Arg203. An N6-carboxylysine modification is found at Lys235. Meso-2,6-diaminopimelate contacts are provided by residues Arg399, 423–426 (DNPR), Gly474, and Glu478. The Meso-diaminopimelate recognition motif motif lies at 423–426 (DNPR).

The protein belongs to the MurCDEF family. MurE subfamily. Mg(2+) is required as a cofactor. Post-translationally, carboxylation is probably crucial for Mg(2+) binding and, consequently, for the gamma-phosphate positioning of ATP.

It is found in the cytoplasm. It carries out the reaction UDP-N-acetyl-alpha-D-muramoyl-L-alanyl-D-glutamate + meso-2,6-diaminopimelate + ATP = UDP-N-acetyl-alpha-D-muramoyl-L-alanyl-gamma-D-glutamyl-meso-2,6-diaminopimelate + ADP + phosphate + H(+). The protein operates within cell wall biogenesis; peptidoglycan biosynthesis. Catalyzes the addition of meso-diaminopimelic acid to the nucleotide precursor UDP-N-acetylmuramoyl-L-alanyl-D-glutamate (UMAG) in the biosynthesis of bacterial cell-wall peptidoglycan. The polypeptide is UDP-N-acetylmuramoyl-L-alanyl-D-glutamate--2,6-diaminopimelate ligase (Synechocystis sp. (strain ATCC 27184 / PCC 6803 / Kazusa)).